We begin with the raw amino-acid sequence, 122 residues long: Holo-[acyl-carrier-protein] synthase (122 aa).

Mg(2+)-binding residues include aspartate 9 and glutamate 58.

This sequence belongs to the P-Pant transferase superfamily. AcpS family. Requires Mg(2+) as cofactor.

Its subcellular location is the cytoplasm. It carries out the reaction apo-[ACP] + CoA = holo-[ACP] + adenosine 3',5'-bisphosphate + H(+). Its function is as follows. Transfers the 4'-phosphopantetheine moiety from coenzyme A to a Ser of acyl-carrier-protein. The polypeptide is Holo-[acyl-carrier-protein] synthase (Chlamydia felis (strain Fe/C-56) (Chlamydophila felis)).